A 114-amino-acid polypeptide reads, in one-letter code: Large ribosomal subunit protein bL20 (114 aa).

It belongs to the bacterial ribosomal protein bL20 family.

Binds directly to 23S ribosomal RNA and is necessary for the in vitro assembly process of the 50S ribosomal subunit. It is not involved in the protein synthesizing functions of that subunit. The chain is Large ribosomal subunit protein bL20 from Flavobacterium psychrophilum (strain ATCC 49511 / DSM 21280 / CIP 103535 / JIP02/86).